A 185-amino-acid polypeptide reads, in one-letter code: Elongation factor P (185 aa).

Belongs to the elongation factor P family.

The protein localises to the cytoplasm. It participates in protein biosynthesis; polypeptide chain elongation. Involved in peptide bond synthesis. Stimulates efficient translation and peptide-bond synthesis on native or reconstituted 70S ribosomes in vitro. Probably functions indirectly by altering the affinity of the ribosome for aminoacyl-tRNA, thus increasing their reactivity as acceptors for peptidyl transferase. The polypeptide is Elongation factor P (Brevibacillus brevis (strain 47 / JCM 6285 / NBRC 100599)).